The primary structure comprises 2270 residues: Protein DOP1B (2270 aa).

Disordered regions lie at residues Met548–Glu572, Leu697–Glu716, and Gln1084–Arg1145. Over residues Ala1095–Arg1145 the composition is skewed to polar residues.

The protein belongs to the DOP1 family.

It localises to the golgi apparatus membrane. May be involved in protein traffic between late Golgi and early endosomes. This Xenopus laevis (African clawed frog) protein is Protein DOP1B (dop1b).